Reading from the N-terminus, the 864-residue chain is Probable LRR receptor-like serine/threonine-protein kinase At1g07550 (864 aa).

The N-terminal stretch at 1–23 (MDTCTRLLFAACATLSILHLVQS) is a signal peptide. Residues 24-507 (QNQQGFISLD…SCGTRFPTAA (484 aa)) lie on the Extracellular side of the membrane. 7 N-linked (GlcNAc...) asparagine glycosylation sites follow: asparagine 49, asparagine 229, asparagine 256, asparagine 289, asparagine 432, asparagine 445, and asparagine 464. 3 LRR repeats span residues 411-434 (RIVK…QNLT), 435-457 (QLQE…LAKM), and 459-480 (YLLV…ALLD). The helical transmembrane segment at 508-528 (VAASVSAVAIIILVLVLIFVL) threads the bilayer. Residues 529-864 (RRRKPSAGKV…VDTEINPKAR (336 aa)) lie on the Cytoplasmic side of the membrane. At threonine 551 the chain carries Phosphothreonine. The Protein kinase domain occupies 560 to 831 (NNFQVVIGKG…QVVHVLNECL (272 aa)). Residues 566-574 (IGKGGFGVV) and lysine 587 each bind ATP. Residue tyrosine 632 is modified to Phosphotyrosine. The active-site Proton acceptor is the aspartate 684. Phosphothreonine is present on residues threonine 718 and threonine 723. Tyrosine 731 carries the phosphotyrosine modification.

Belongs to the protein kinase superfamily. Ser/Thr protein kinase family.

The protein resides in the membrane. The catalysed reaction is L-seryl-[protein] + ATP = O-phospho-L-seryl-[protein] + ADP + H(+). The enzyme catalyses L-threonyl-[protein] + ATP = O-phospho-L-threonyl-[protein] + ADP + H(+). In Arabidopsis thaliana (Mouse-ear cress), this protein is Probable LRR receptor-like serine/threonine-protein kinase At1g07550.